Reading from the N-terminus, the 134-residue chain is ATP synthase epsilon chain, chloroplastic (134 aa).

This sequence belongs to the ATPase epsilon chain family. F-type ATPases have 2 components, CF(1) - the catalytic core - and CF(0) - the membrane proton channel. CF(1) has five subunits: alpha(3), beta(3), gamma(1), delta(1), epsilon(1). CF(0) has three main subunits: a, b and c.

Its subcellular location is the plastid. The protein localises to the chloroplast thylakoid membrane. Its function is as follows. Produces ATP from ADP in the presence of a proton gradient across the membrane. In Spinacia oleracea (Spinach), this protein is ATP synthase epsilon chain, chloroplastic.